A 540-amino-acid chain; its full sequence is Phenylalanine--tRNA ligase beta subunit (540 aa).

A B5 domain is found at 266 to 342; it reads LRPEKRTVSV…IAYGYDKIET (77 aa). Residues D320, D326, E329, and D330 each coordinate Mg(2+).

Belongs to the phenylalanyl-tRNA synthetase beta subunit family. Type 2 subfamily. As to quaternary structure, tetramer of two alpha and two beta subunits. Mg(2+) serves as cofactor.

The protein localises to the cytoplasm. It catalyses the reaction tRNA(Phe) + L-phenylalanine + ATP = L-phenylalanyl-tRNA(Phe) + AMP + diphosphate + H(+). This Methanocorpusculum labreanum (strain ATCC 43576 / DSM 4855 / Z) protein is Phenylalanine--tRNA ligase beta subunit.